Consider the following 191-residue polypeptide: Repressor Rok (191 aa).

The stretch at 2 to 43 (FNEREALRLRLEQLNEAEVKVIREYQIERDKIYAKLRELDRN) forms a coiled coil. Over residues 75–96 (SYQPQSQQQSVQPQLQSISSLP) the composition is skewed to low complexity. Residues 75–116 (SYQPQSQQQSVQPQLQSISSLPAGIPDGTTRRRRGTARPGSK) are disordered. Residues 95–191 (LPAGIPDGTT…EIESAESANE (97 aa)) form a DNA-binding region.

It is found in the cytoplasm. The protein resides in the nucleoid. Functionally, repressor of comK, the master regulator of competence development. Overexpression seems to be lethal. Represses at least 20 genes that specify membrane-localized and secreted proteins, including some that encode products with antibiotic activity. Binds to many AT-rich sites in the chromosome, many of which are known or thought to derive from horizontal gene transfer; helps keep mobile element ICEBs1 quiescent in the genome. Binds to its own promoter and is thus probably autoregulatory. This is Repressor Rok from Bacillus subtilis (strain 168).